Reading from the N-terminus, the 332-residue chain is 6-phosphogluconolactonase (332 aa).

It belongs to the cycloisomerase 2 family.

It carries out the reaction 6-phospho-D-glucono-1,5-lactone + H2O = 6-phospho-D-gluconate + H(+). The protein operates within carbohydrate degradation; pentose phosphate pathway; D-ribulose 5-phosphate from D-glucose 6-phosphate (oxidative stage): step 2/3. In terms of biological role, catalyzes the hydrolysis of 6-phosphogluconolactone to 6-phosphogluconate. This Pectobacterium carotovorum subsp. carotovorum (strain PC1) protein is 6-phosphogluconolactonase.